A 167-amino-acid polypeptide reads, in one-letter code: Secretion monitor (167 aa).

The first 36 residues, 1–36 (MIGILNRWRQFGRRYFWPHLLLGMVAASFGLPQASA), serve as a signal peptide directing secretion.

The protein belongs to the SecM family.

It is found in the cytoplasm. It localises to the cytosol. The protein localises to the periplasm. Regulates secA expression by translational coupling of the secM secA operon. Translational pausing at a specific Pro residue 5 residues before the end of the protein may allow disruption of a mRNA repressor helix that normally suppresses secA translation initiation. The protein is Secretion monitor of Erwinia tasmaniensis (strain DSM 17950 / CFBP 7177 / CIP 109463 / NCPPB 4357 / Et1/99).